A 366-amino-acid polypeptide reads, in one-letter code: Heat-inducible transcription repressor HrcA (366 aa).

Over residues 298-309 the composition is skewed to polar residues; the sequence is SSGYGQSSTPSA. A disordered region spans residues 298 to 318; sequence SSGYGQSSTPSANVEHEEYDT.

Belongs to the HrcA family.

Negative regulator of class I heat shock genes (grpE-dnaK-dnaJ and groELS operons). Prevents heat-shock induction of these operons. The polypeptide is Heat-inducible transcription repressor HrcA (Bifidobacterium animalis subsp. lactis (strain AD011)).